Reading from the N-terminus, the 401-residue chain is MSAIMLRSGNVARSTILAGGPLIGGPMTFRSAVSSTRTFSLFTKARIQSDDMKRASLSLQPSVREAEKSQGPVVGSEGRGVEGPHYQDQVSHNVLSDASTTGAWTMFNPIYTEKELNTVQVVGRAPVTFGDKAAHRTVKFLRKCFDLLTGYTPYEVPASVLAQKPIPIAELRSKGKLLSDQKWLFRIILLESIAGVPGMVGGTLRHLRSMRLLKRDGGWIHSLLEEAENERMHLLTFMTIAQPGIFTRALVLAAQGVFYNAFFLTYLISPRIAHRFVGALEEEAVRTYTHCISDMEAGLIPEWKDMPAPAIAIDYWRLPASSSLLDVIRAVRADEATHRFVNHSLANLDQKRDFNPFALSEASPEERGSKWGYTREESAKFALEQQRKLMAASEKSSGLVE.

The segment at 53-81 (KRASLSLQPSVREAEKSQGPVVGSEGRGV) is disordered. The chain crosses the membrane as a helical span at residues 184 to 204 (LFRIILLESIAGVPGMVGGTL). Fe cation contacts are provided by Glu191, Glu230, and His233. Residues 249–269 (ALVLAAQGVFYNAFFLTYLIS) form a helical membrane-spanning segment. Fe cation contacts are provided by Glu281, Glu282, Glu335, and His338.

The protein belongs to the alternative oxidase family. Fe cation serves as cofactor.

Its subcellular location is the mitochondrion inner membrane. Catalyzes cyanide-resistant oxygen consumption. May increase respiration when the cytochrome respiratory pathway is restricted, or in response to low temperatures. This Cryptococcus neoformans var. grubii serotype A (strain H99 / ATCC 208821 / CBS 10515 / FGSC 9487) (Filobasidiella neoformans var. grubii) protein is Alternative oxidase, mitochondrial (AOX1).